Reading from the N-terminus, the 317-residue chain is Transaldolase 1 (317 aa).

Residue Lys-132 is the Schiff-base intermediate with substrate of the active site.

This sequence belongs to the transaldolase family. Type 1 subfamily. As to quaternary structure, homodimer.

The protein localises to the cytoplasm. The enzyme catalyses D-sedoheptulose 7-phosphate + D-glyceraldehyde 3-phosphate = D-erythrose 4-phosphate + beta-D-fructose 6-phosphate. Its pathway is carbohydrate degradation; pentose phosphate pathway; D-glyceraldehyde 3-phosphate and beta-D-fructose 6-phosphate from D-ribose 5-phosphate and D-xylulose 5-phosphate (non-oxidative stage): step 2/3. Transaldolase is important for the balance of metabolites in the pentose-phosphate pathway. In Salmonella paratyphi A (strain ATCC 9150 / SARB42), this protein is Transaldolase 1.